A 537-amino-acid chain; its full sequence is Probable feruloyl esterase ARB_07085 (537 aa).

The first 22 residues, 1–22, serve as a signal peptide directing secretion; sequence MVTLPLLLSILPLAAVFSSAAS. N-linked (GlcNAc...) asparagine glycosylation is found at Asn-67, Asn-76, and Asn-189. 3 cysteine pairs are disulfide-bonded: Cys-196/Cys-459, Cys-263/Cys-280, and Cys-508/Cys-529. Catalysis depends on Ser-197, which acts as the Acyl-ester intermediate. Residues Asp-264, Asp-267, Val-269, Asp-271, and Val-273 each contribute to the Ca(2+) site. Asn-339 carries N-linked (GlcNAc...) asparagine glycosylation. Catalysis depends on charge relay system residues Asp-419 and His-458.

The protein belongs to the tannase family.

The protein localises to the secreted. The enzyme catalyses feruloyl-polysaccharide + H2O = ferulate + polysaccharide.. Its function is as follows. Hydrolyzes the feruloyl-arabinose ester bond in arabinoxylans as well as the feruloyl-galactose and feruloyl-arabinose ester bonds. In Arthroderma benhamiae (strain ATCC MYA-4681 / CBS 112371) (Trichophyton mentagrophytes), this protein is Probable feruloyl esterase ARB_07085.